A 628-amino-acid polypeptide reads, in one-letter code: DNA-directed RNA polymerase subunit beta' (628 aa).

Cys70, Cys72, Cys85, and Cys88 together coordinate Zn(2+). Mg(2+) is bound by residues Asp472, Asp474, and Asp476.

Belongs to the RNA polymerase beta' chain family. RpoC1 subfamily. In plastids the minimal PEP RNA polymerase catalytic core is composed of four subunits: alpha, beta, beta', and beta''. When a (nuclear-encoded) sigma factor is associated with the core the holoenzyme is formed, which can initiate transcription. Mg(2+) is required as a cofactor. It depends on Zn(2+) as a cofactor.

The protein resides in the plastid. The protein localises to the chloroplast. It carries out the reaction RNA(n) + a ribonucleoside 5'-triphosphate = RNA(n+1) + diphosphate. In terms of biological role, DNA-dependent RNA polymerase catalyzes the transcription of DNA into RNA using the four ribonucleoside triphosphates as substrates. This Gracilaria tenuistipitata var. liui (Red alga) protein is DNA-directed RNA polymerase subunit beta'.